A 246-amino-acid polypeptide reads, in one-letter code: Anamorsin homolog (246 aa).

The interval 1-124 is N-terminal SAM-like domain; the sequence is MRVVVVDLDG…ARGTAFSLKS (124 aa). Residues 125 to 158 are linker; that stretch reads RAVRVVTADAGWGADADVDDELIDESALLTELDV. [2Fe-2S] cluster is bound by residues cysteine 168, cysteine 177, cysteine 180, and cysteine 182. Positions 168-182 are fe-S binding site A; it reads CDVGAGKKACKNCTC. Cysteine 206, cysteine 209, cysteine 217, and cysteine 220 together coordinate [4Fe-4S] cluster. 2 consecutive short sequence motifs (cx2C motif) follow at residues 206 to 209 and 217 to 220; these read CGNC and CAGC. The fe-S binding site B stretch occupies residues 206-220; it reads CGNCALGDAFRCAGC.

The protein belongs to the anamorsin family. As to quaternary structure, monomer. [2Fe-2S] cluster serves as cofactor. The cofactor is [4Fe-4S] cluster.

It is found in the cytoplasm. It localises to the mitochondrion intermembrane space. Its function is as follows. Component of the cytosolic iron-sulfur (Fe-S) protein assembly (CIA) machinery. Required for the maturation of extramitochondrial Fe-S proteins. Part of an electron transfer chain functioning in an early step of cytosolic Fe-S biogenesis, facilitating the de novo assembly of a [4Fe-4S] cluster on the cytosolic Fe-S scaffold complex. Electrons are transferred from NADPH via a FAD- and FMN-containing diflavin oxidoreductase. Together with the diflavin oxidoreductase, also required for the assembly of the diferric tyrosyl radical cofactor of ribonucleotide reductase (RNR), probably by providing electrons for reduction during radical cofactor maturation in the catalytic small subunit. This is Anamorsin homolog from Ostreococcus tauri.